A 540-amino-acid chain; its full sequence is MGERVLRVLTCGDVYGRFDVLFNRVRVIQKKSGQFDMLLCVGSFFGTSPESQTHWDEYKSGAKKAPIQTYVLGANNQETVKHFKDVDGCELAANITYLGRKGLFTGASGLQIAYLSGIESSSEPAPAYCFTAKDVTSLKMSLMSNSKFKGVDILLTSSWPKDVSNYGNALPNEASKKCGSALISNLAFNLKPRYHFAALEGENYERLPYRNHLVLQENAQHVSRFISLASVGNLDKKKYIYAFNIVPMSLTDIADLVKQPLDVTENPYRKSDKDTPKSKGNKSAEEEEPTQQFFFDLNKPQGKKRQTDGKGGRQSQAKQPRKHPQPTGPCWFCLASPEVEKHLVVSIGDNCYVALAKGGLMSDHVLILPIGHYQSTVDLSSDVVKEVEQYKAALRTFFKTKGKRYVMFERNYKSQHLQLQVVPLPLSCCTTEDIKETFILQAQEQGMELLEIPEHSDIKQIAQPGTPYFYVELDSGEKLFHRIKKHFPLQFGREVLASEAILNIPTRADWKDCKSSRAEEEDLTKTFRDAFEPFDFTLQD.

Positions 265–326 (ENPYRKSDKD…AKQPRKHPQP (62 aa)) are disordered. Residues 267-277 (PYRKSDKDTPK) show a composition bias toward basic and acidic residues.

It belongs to the CWF19 family.

This Xenopus laevis (African clawed frog) protein is CWF19-like protein 1 (cwf19l1).